A 531-amino-acid chain; its full sequence is Methyl-accepting chemotaxis protein McpN (531 aa).

Topologically, residues 1-24 (MNESVARVFDRILRGLGLKTLNAQ) are cytoplasmic. Residues 25 to 45 (FLLSYALMFGLAACASVALYL) form a helical membrane-spanning segment. Topologically, residues 46-174 (SMSISPETIN…LMSARADSVQ (129 aa)) are periplasmic. The segment at 52–140 (ETINVAGAQR…AMLDQVAQPA (89 aa)) is pilJ-type. The short motif at 54 to 65 (INVAGAQRMLSQ) is the N-box element. Nitrate is bound at residue R61. A helical membrane pass occupies residues 175 to 195 (HTQMWIAFGCLLAILVLVVLG). At 196 to 531 (RQFGLAPLMR…LRVVLGRFRT (336 aa)) the chain is on the cytoplasmic side. Residues 201–254 (APLMRQLRGLEVALTEVGAANFTHALAAGHADNEIGRIVAGYERMRQDVSGLLA) enclose the HAMP domain. The Methyl-accepting transducer domain occupies 259-495 (SAAETDKDVA…DIDRNITNVS (237 aa)).

Belongs to the methyl-accepting chemotaxis (MCP) protein family. Ligand free ligand-binding domain (LBD) is present in a monomer-dimer equilibrium. Nitrate binding to the periplasmic LBD stabilizes the homodimer.

The protein localises to the cell inner membrane. Chemotactic-signal transducers respond to changes in the concentration of attractants and repellents in the environment, transduce a signal from the outside to the inside of the cell, and facilitate sensory adaptation through the variation of the level of methylation. McpN is a chemoreceptor that recognizes specifically nitrate and mediates chemoattraction. Binds nitrate specifically and shows no affinity for other ligands such as nitrite. McpN-mediated taxis occurs only under nitrate starvation conditions. The polypeptide is Methyl-accepting chemotaxis protein McpN (Pseudomonas aeruginosa (strain ATCC 15692 / DSM 22644 / CIP 104116 / JCM 14847 / LMG 12228 / 1C / PRS 101 / PAO1)).